We begin with the raw amino-acid sequence, 118 residues long: Nitrogenase-stabilizing/protective protein NifW (118 aa).

This sequence belongs to the NifW family. As to quaternary structure, homotrimer; associates with NifD.

May protect the nitrogenase Fe-Mo protein from oxidative damage. The protein is Nitrogenase-stabilizing/protective protein NifW of Rhodopseudomonas palustris (strain BisB5).